Consider the following 548-residue polypeptide: Glucan endo-1,3-beta-glucosidase (548 aa).

Positions 1–36 form a signal peptide, tat-type signal; the sequence is MPHDRKNSSRRAWAALCAAVLAVSGALVGVAAPASA. The GH64 domain occupies 38-396; the sequence is PATIPLTITN…PQAAYIKLDP (359 aa). Catalysis depends on glutamate 153, which acts as the Proton donor. The Proton acceptor role is filled by aspartate 169. Residues 422–548 enclose the Ricin B-type lectin domain; sequence GTGALRIGST…NQTEAQRWTL (127 aa).

This sequence belongs to the glycosyl hydrolase 64 family. In terms of processing, predicted to be exported by the Tat system. The position of the signal peptide cleavage has not been experimentally proven.

It localises to the periplasm. The catalysed reaction is Hydrolysis of (1-&gt;3)-beta-D-glucosidic linkages in (1-&gt;3)-beta-D-glucans.. In terms of biological role, lysis of cellular walls containing beta-1,3-glucans. Implicated in the defense against fungal pathogens. The polypeptide is Glucan endo-1,3-beta-glucosidase (glcI) (Arthrobacter sp. (strain YCWD3)).